Here is a 167-residue protein sequence, read N- to C-terminus: Small ribosomal subunit protein uS5 (167 aa).

In terms of domain architecture, S5 DRBM spans 12-75 (IEDRVVAINR…ETARKSLIEV (64 aa)).

It belongs to the universal ribosomal protein uS5 family. In terms of assembly, part of the 30S ribosomal subunit. Contacts proteins S4 and S8.

With S4 and S12 plays an important role in translational accuracy. Its function is as follows. Located at the back of the 30S subunit body where it stabilizes the conformation of the head with respect to the body. This chain is Small ribosomal subunit protein uS5, found in Pediococcus pentosaceus (strain ATCC 25745 / CCUG 21536 / LMG 10740 / 183-1w).